Here is a 194-residue protein sequence, read N- to C-terminus: uncharacterized protein (194 aa).

The interval 25–156 is disordered; the sequence is PSWACRRGGP…ESPLGTLPCS (132 aa). Polar residues predominate over residues 43–57; the sequence is GPSTVPVTPTAGSCQ. Over residues 104 to 113 the composition is skewed to low complexity; that stretch reads SSSPGPSFHL.

This is an uncharacterized protein from Homo sapiens (Human).